A 108-amino-acid polypeptide reads, in one-letter code: ATP synthase peripheral stalk subunit F6, mitochondrial (108 aa).

Residues 1–32 (MILQRLFRFSSIIRSAVSVHFRRNIGVTAVAF) constitute a mitochondrion transit peptide. 3 positions are modified to N6-acetyllysine: lysine 41, lysine 46, and lysine 79. N6-acetyllysine; alternate is present on residues lysine 84, lysine 94, and lysine 99. N6-succinyllysine; alternate occurs at positions 84, 94, and 99. Lysine 105 carries the N6-acetyllysine modification.

The protein belongs to the eukaryotic ATPase subunit F6 family. Component of the ATP synthase complex composed at least of ATP5F1A/subunit alpha, ATP5F1B/subunit beta, ATP5MC1/subunit c (homooctomer), MT-ATP6/subunit a, MT-ATP8/subunit 8, ATP5ME/subunit e, ATP5MF/subunit f, ATP5MG/subunit g, ATP5MK/subunit k, ATP5MJ/subunit j, ATP5F1C/subunit gamma, ATP5F1D/subunit delta, ATP5F1E/subunit epsilon, ATP5PF/subunit F6, ATP5PB/subunit b, ATP5PD/subunit d, ATP5PO/subunit OSCP. ATP synthase complex consists of a soluble F(1) head domain (subunits alpha(3) and beta(3)) - the catalytic core - and a membrane F(0) domain - the membrane proton channel (subunits c, a, 8, e, f, g, k and j). These two domains are linked by a central stalk (subunits gamma, delta, and epsilon) rotating inside the F1 region and a stationary peripheral stalk (subunits F6, b, d, and OSCP).

The protein localises to the mitochondrion. The protein resides in the mitochondrion inner membrane. Functionally, subunit F6, of the mitochondrial membrane ATP synthase complex (F(1)F(0) ATP synthase or Complex V) that produces ATP from ADP in the presence of a proton gradient across the membrane which is generated by electron transport complexes of the respiratory chain. ATP synthase complex consist of a soluble F(1) head domain - the catalytic core - and a membrane F(1) domain - the membrane proton channel. These two domains are linked by a central stalk rotating inside the F(1) region and a stationary peripheral stalk. During catalysis, ATP synthesis in the catalytic domain of F(1) is coupled via a rotary mechanism of the central stalk subunits to proton translocation. In vivo, can only synthesize ATP although its ATP hydrolase activity can be activated artificially in vitro. Part of the complex F(0) domain. Part of the complex F(0) domain and the peripheric stalk, which acts as a stator to hold the catalytic alpha(3)beta(3) subcomplex and subunit a/ATP6 static relative to the rotary elements. The sequence is that of ATP synthase peripheral stalk subunit F6, mitochondrial from Macaca fascicularis (Crab-eating macaque).